Reading from the N-terminus, the 262-residue chain is Fibroin light chain (262 aa).

A signal peptide spans 1–16; that stretch reads MKPIFLVLLVATSAYA. At S19 the chain carries N-acetylserine; in short form. C101 and C160 are joined by a disulfide.

As to quaternary structure, silk fibroin elementary unit consists in a disulfide-linked heavy and light chain and a p25 glycoprotein in molar ratios of 6:6:1. This results in a complex of approximately 2.3 MDa. In terms of processing, the interchain disulfide bridge is essential for the intracellular transport and secretion of fibroin. Post-translationally, partially N-terminally processed to yield a short form which lacks the first two residues of the long form. Produced exclusively in the posterior (PSG) section of silk glands, which are essentially modified salivary glands.

It localises to the secreted. It is likely that the major role of L-chain is to prevent the retention of H-chain in ER by forming the disulfide linkage. The sequence is that of Fibroin light chain (FIBL) from Bombyx mori (Silk moth).